Reading from the N-terminus, the 148-residue chain is Ribonuclease H (148 aa).

The RNase H type-1 domain maps to 1 to 142 (MSDSVELYTD…ADQLANRGVD (142 aa)). Positions 10, 48, 70, and 134 each coordinate Mg(2+). Residues 129–148 (GNERADQLANRGVDEVRAKR) form a disordered region.

The protein belongs to the RNase H family. As to quaternary structure, monomer. Mg(2+) serves as cofactor.

It localises to the cytoplasm. It carries out the reaction Endonucleolytic cleavage to 5'-phosphomonoester.. Its function is as follows. Endonuclease that specifically degrades the RNA of RNA-DNA hybrids. The chain is Ribonuclease H from Pseudomonas putida (strain W619).